A 90-amino-acid polypeptide reads, in one-letter code: uncharacterized protein (90 aa).

An N-terminal signal peptide occupies residues 1–18 (MKTLPVLVLSLTLLTVFS). The tract at residues 28–50 (QAKQLLRSRRQDRPSKPGFPDEP) is disordered.

The protein localises to the secreted. This is an uncharacterized protein from Homo sapiens (Human).